We begin with the raw amino-acid sequence, 132 residues long: Small ribosomal subunit protein uS8 (132 aa).

It belongs to the universal ribosomal protein uS8 family. As to quaternary structure, part of the 30S ribosomal subunit. Contacts proteins S5 and S12.

One of the primary rRNA binding proteins, it binds directly to 16S rRNA central domain where it helps coordinate assembly of the platform of the 30S subunit. The sequence is that of Small ribosomal subunit protein uS8 from Staphylococcus epidermidis (strain ATCC 35984 / DSM 28319 / BCRC 17069 / CCUG 31568 / BM 3577 / RP62A).